The chain runs to 101 residues: NADH-quinone oxidoreductase subunit K (101 aa).

A run of 3 helical transmembrane segments spans residues leucine 4–leucine 24, isoleucine 30–phenylalanine 50, and isoleucine 61–leucine 81.

The protein belongs to the complex I subunit 4L family. As to quaternary structure, NDH-1 is composed of 14 different subunits. Subunits NuoA, H, J, K, L, M, N constitute the membrane sector of the complex.

It localises to the cell inner membrane. It carries out the reaction a quinone + NADH + 5 H(+)(in) = a quinol + NAD(+) + 4 H(+)(out). In terms of biological role, NDH-1 shuttles electrons from NADH, via FMN and iron-sulfur (Fe-S) centers, to quinones in the respiratory chain. The immediate electron acceptor for the enzyme in this species is believed to be ubiquinone. Couples the redox reaction to proton translocation (for every two electrons transferred, four hydrogen ions are translocated across the cytoplasmic membrane), and thus conserves the redox energy in a proton gradient. In Laribacter hongkongensis (strain HLHK9), this protein is NADH-quinone oxidoreductase subunit K.